The chain runs to 303 residues: Uridine diphosphate glucose pyrophosphatase NUDT22 (303 aa).

7 residues coordinate substrate: Phe56, Tyr87, Arg139, Ala144, Asp151, His156, and Glu158. The Nudix hydrolase domain occupies 118–285 (ADPLGVGAAL…KGAIILYNRV (168 aa)). The disordered stretch occupies residues 148–168 (GLVDVPGGHPEPQALCPGGSP). A Nudix box motif is present at residues 175–196 (GQLVVHELFSSVLQEICDEVNL). Glu189 and Glu193 together coordinate Mg(2+). Ser274 serves as a coordination point for substrate.

It belongs to the Nudix hydrolase family. It depends on Mg(2+) as a cofactor.

The catalysed reaction is UDP-sugar + H2O = UMP + alpha-D-aldose 1-phosphate.. Its function is as follows. Hydrolyzes UDP-glucose to glucose 1-phosphate and UMP and UDP-galactose to galactose 1-phosphate and UMP. Preferred substrate is UDP-glucose. The chain is Uridine diphosphate glucose pyrophosphatase NUDT22 (NUDT22) from Homo sapiens (Human).